The sequence spans 311 residues: Homoserine kinase (311 aa).

Residue 96 to 106 coordinates ATP; sequence PLARGLGSSAA.

This sequence belongs to the GHMP kinase family. Homoserine kinase subfamily.

Its subcellular location is the cytoplasm. The enzyme catalyses L-homoserine + ATP = O-phospho-L-homoserine + ADP + H(+). The protein operates within amino-acid biosynthesis; L-threonine biosynthesis; L-threonine from L-aspartate: step 4/5. Functionally, catalyzes the ATP-dependent phosphorylation of L-homoserine to L-homoserine phosphate. This chain is Homoserine kinase, found in Natranaerobius thermophilus (strain ATCC BAA-1301 / DSM 18059 / JW/NM-WN-LF).